We begin with the raw amino-acid sequence, 101 residues long: Large ribosomal subunit protein uL24 (101 aa).

Belongs to the universal ribosomal protein uL24 family. As to quaternary structure, part of the 50S ribosomal subunit.

In terms of biological role, one of two assembly initiator proteins, it binds directly to the 5'-end of the 23S rRNA, where it nucleates assembly of the 50S subunit. One of the proteins that surrounds the polypeptide exit tunnel on the outside of the subunit. In Streptococcus agalactiae serotype III (strain NEM316), this protein is Large ribosomal subunit protein uL24.